The chain runs to 245 residues: Pyridoxine 5'-phosphate synthase (245 aa).

Residue N7 participates in 3-amino-2-oxopropyl phosphate binding. 9 to 10 (DH) is a binding site for 1-deoxy-D-xylulose 5-phosphate. R18 provides a ligand contact to 3-amino-2-oxopropyl phosphate. The active-site Proton acceptor is the H43. Residues R45 and H50 each contribute to the 1-deoxy-D-xylulose 5-phosphate site. The active-site Proton acceptor is the E70. T100 provides a ligand contact to 1-deoxy-D-xylulose 5-phosphate. The active-site Proton donor is H190. 3-amino-2-oxopropyl phosphate-binding positions include G191 and 212-213 (GH).

The protein belongs to the PNP synthase family. In terms of assembly, homooctamer; tetramer of dimers.

The protein resides in the cytoplasm. It carries out the reaction 3-amino-2-oxopropyl phosphate + 1-deoxy-D-xylulose 5-phosphate = pyridoxine 5'-phosphate + phosphate + 2 H2O + H(+). Its pathway is cofactor biosynthesis; pyridoxine 5'-phosphate biosynthesis; pyridoxine 5'-phosphate from D-erythrose 4-phosphate: step 5/5. In terms of biological role, catalyzes the complicated ring closure reaction between the two acyclic compounds 1-deoxy-D-xylulose-5-phosphate (DXP) and 3-amino-2-oxopropyl phosphate (1-amino-acetone-3-phosphate or AAP) to form pyridoxine 5'-phosphate (PNP) and inorganic phosphate. This chain is Pyridoxine 5'-phosphate synthase, found in Prochlorococcus marinus (strain NATL1A).